The following is a 217-amino-acid chain: UPF0502 protein ASA_1460 (217 aa).

This sequence belongs to the UPF0502 family.

The chain is UPF0502 protein ASA_1460 from Aeromonas salmonicida (strain A449).